A 318-amino-acid polypeptide reads, in one-letter code: Methionyl-tRNA formyltransferase (318 aa).

(6S)-5,6,7,8-tetrahydrofolate is bound at residue 114–117 (SLLP).

It belongs to the Fmt family.

It carries out the reaction L-methionyl-tRNA(fMet) + (6R)-10-formyltetrahydrofolate = N-formyl-L-methionyl-tRNA(fMet) + (6S)-5,6,7,8-tetrahydrofolate + H(+). In terms of biological role, attaches a formyl group to the free amino group of methionyl-tRNA(fMet). The formyl group appears to play a dual role in the initiator identity of N-formylmethionyl-tRNA by promoting its recognition by IF2 and preventing the misappropriation of this tRNA by the elongation apparatus. The chain is Methionyl-tRNA formyltransferase from Protochlamydia amoebophila (strain UWE25).